The following is a 424-amino-acid chain: Tyrosine--tRNA ligase (424 aa).

Tyr37 contributes to the L-tyrosine binding site. The 'HIGH' region signature appears at Pro42–His51. Lys144 carries the N6-acetyllysine modification. Positions 175 and 179 each coordinate L-tyrosine. The short motif at Lys235–Thr239 is the 'KMSKS' region element. Lys238 is a binding site for ATP. Residues Ala357 to Gly414 form the S4 RNA-binding domain.

The protein belongs to the class-I aminoacyl-tRNA synthetase family. TyrS type 1 subfamily. As to quaternary structure, homodimer.

It localises to the cytoplasm. The catalysed reaction is tRNA(Tyr) + L-tyrosine + ATP = L-tyrosyl-tRNA(Tyr) + AMP + diphosphate + H(+). Its function is as follows. Catalyzes the attachment of tyrosine to tRNA(Tyr) in a two-step reaction: tyrosine is first activated by ATP to form Tyr-AMP and then transferred to the acceptor end of tRNA(Tyr). This is Tyrosine--tRNA ligase from Escherichia fergusonii (strain ATCC 35469 / DSM 13698 / CCUG 18766 / IAM 14443 / JCM 21226 / LMG 7866 / NBRC 102419 / NCTC 12128 / CDC 0568-73).